We begin with the raw amino-acid sequence, 670 residues long: tRNA 5-methylaminomethyl-2-thiouridine biosynthesis bifunctional protein MnmC (670 aa).

Residues 1–242 (MTFSVQHAEI…KRECLSGLKI (242 aa)) are tRNA (mnm(5)s(2)U34)-methyltransferase. The segment at 269–670 (IGGGIASLCA…KKWLKGSKVE (402 aa)) is FAD-dependent cmnm(5)s(2)U34 oxidoreductase.

In the N-terminal section; belongs to the methyltransferase superfamily. tRNA (mnm(5)s(2)U34)-methyltransferase family. This sequence in the C-terminal section; belongs to the DAO family. Requires FAD as cofactor.

It is found in the cytoplasm. The enzyme catalyses 5-aminomethyl-2-thiouridine(34) in tRNA + S-adenosyl-L-methionine = 5-methylaminomethyl-2-thiouridine(34) in tRNA + S-adenosyl-L-homocysteine + H(+). Functionally, catalyzes the last two steps in the biosynthesis of 5-methylaminomethyl-2-thiouridine (mnm(5)s(2)U) at the wobble position (U34) in tRNA. Catalyzes the FAD-dependent demodification of cmnm(5)s(2)U34 to nm(5)s(2)U34, followed by the transfer of a methyl group from S-adenosyl-L-methionine to nm(5)s(2)U34, to form mnm(5)s(2)U34. This is tRNA 5-methylaminomethyl-2-thiouridine biosynthesis bifunctional protein MnmC from Haemophilus influenzae (strain PittGG).